Reading from the N-terminus, the 768-residue chain is Phosphoribosylformylglycinamidine synthase subunit PurL (768 aa).

The active site involves His-44. ATP is bound by residues Tyr-47 and Lys-86. A Mg(2+)-binding site is contributed by Glu-88. Substrate is bound by residues 89–92 and Arg-111; that span reads SHNH. The active-site Proton acceptor is His-90. Asp-112 serves as a coordination point for Mg(2+). Residue Gln-235 participates in substrate binding. Residue Asp-263 coordinates Mg(2+). 307 to 309 contributes to the substrate binding site; the sequence is ESQ. ATP contacts are provided by Asp-518 and Gly-555. Asn-556 is a binding site for Mg(2+). Ser-558 serves as a coordination point for substrate.

Belongs to the FGAMS family. In terms of assembly, monomer. Part of the FGAM synthase complex composed of 1 PurL, 1 PurQ and 2 PurS subunits.

Its subcellular location is the cytoplasm. It catalyses the reaction N(2)-formyl-N(1)-(5-phospho-beta-D-ribosyl)glycinamide + L-glutamine + ATP + H2O = 2-formamido-N(1)-(5-O-phospho-beta-D-ribosyl)acetamidine + L-glutamate + ADP + phosphate + H(+). It participates in purine metabolism; IMP biosynthesis via de novo pathway; 5-amino-1-(5-phospho-D-ribosyl)imidazole from N(2)-formyl-N(1)-(5-phospho-D-ribosyl)glycinamide: step 1/2. In terms of biological role, part of the phosphoribosylformylglycinamidine synthase complex involved in the purines biosynthetic pathway. Catalyzes the ATP-dependent conversion of formylglycinamide ribonucleotide (FGAR) and glutamine to yield formylglycinamidine ribonucleotide (FGAM) and glutamate. The FGAM synthase complex is composed of three subunits. PurQ produces an ammonia molecule by converting glutamine to glutamate. PurL transfers the ammonia molecule to FGAR to form FGAM in an ATP-dependent manner. PurS interacts with PurQ and PurL and is thought to assist in the transfer of the ammonia molecule from PurQ to PurL. This chain is Phosphoribosylformylglycinamidine synthase subunit PurL, found in Synechococcus sp. (strain JA-2-3B'a(2-13)) (Cyanobacteria bacterium Yellowstone B-Prime).